The chain runs to 105 residues: Defensin-like protein (105 aa).

The first 25 residues, 1-25 (MARSLCFMAFAILAMMLFVAYEVQA), serve as a signal peptide directing secretion. 4 disulfide bridges follow: cysteine 28-cysteine 72, cysteine 39-cysteine 59, cysteine 45-cysteine 66, and cysteine 49-cysteine 68.

Belongs to the DEFL family. Flower. Found in petals, stamen and pistils, but not in sepals. In particular, accumulation in a configuration surrounding the inner reproductive whorls.

It is found in the secreted. It localises to the cell wall. Its subcellular location is the vacuole. In terms of biological role, involved in floral organogenesis. May play a protective role in flowers by protecting the reproductive organs from potential pathogen attack. In Nicotiana tabacum (Common tobacco), this protein is Defensin-like protein (FST).